The following is a 152-amino-acid chain: Transcriptional regulator MraZ (152 aa).

2 consecutive SpoVT-AbrB domains span residues 5–52 (ATLV…PLPE) and 81–124 (ASEC…DETT).

This sequence belongs to the MraZ family. As to quaternary structure, forms oligomers.

It localises to the cytoplasm. The protein resides in the nucleoid. Negatively regulates its own expression and that of the subsequent genes in the proximal part of the division and cell wall (dcw) gene cluster. Acts by binding directly to DNA. May also regulate the expression of genes outside the dcw cluster. This is Transcriptional regulator MraZ from Salmonella typhi.